The chain runs to 460 residues: MTEDKSQVKIRFFTREKDELLHVQDTPMYAPISLKRYGLSEIVNHLLGSEKPVPFDFLIEGELLRTSLHDYLTKKGLSSEASLNVEYTRAILPPSYLNSFSNEDWVSSLDVGDGSKHIISGSYDGIVRTWDLSGNVQKQYSGHSGPIRAVKYISNTRLVSAGNDRTLRLWKTKNDDLKLTSQQQAQEDDDDEVNIEDGKTLAILEGHKAPVVSIDVSDNSRILSASYDNSIGFWSTIYKEMTVVDPLEDINNPNNKISTAARKRRKLTMKDGTIRRRAPLSLLESHTAPVEQVIFDSTDNTVGYSVSQDHTIKTWDLVTARCIDTRTTSYSLLSIAQLSTLNLLACGSSARHITLHDPRVGASSKVTQQQLIGHKNFVSSLDTCPENEYILCSGSHDGTVKVWDVRSTSPMYTITREDKSVQKGVNDKVFAVKWAEKVGIISAGQDKKIQINKGDNIFKN.

The interval 8–89 (VKIRFFTREK…EASLNVEYTR (82 aa)) is ubiquitin-like (UBL) domain. Positions 99 to 460 (SFSNEDWVSS…INKGDNIFKN (362 aa)) are sufficient for interaction with ERB1 and association with 66S pre-ribosomes. WD repeat units follow at residues 101 to 140 (SNEDWVSSLDVGDGSKHIISGSYDGIVRTWDLSGNVQKQY), 142 to 180 (GHSGPIRAVKYISNTRLVSAGNDRTLRLWKTKNDDLKLT), 206 to 244 (GHKAPVVSIDVSDNSRILSASYDNSIGFWSTIYKEMTVV), 285 to 325 (SHTA…CIDT), 327 to 366 (TTSYSLLSIAQLSTLNLLACGSSARHITLHDPRVGASSKV), 373 to 413 (GHKN…PMYT), and 424 to 460 (GVNDKVFAVKWAEKVGIISAGQDKKIQINKGDNIFKN).

This sequence belongs to the WD repeat WDR12/YTM1 family. Component of the NOP7 complex, composed of ERB1, NOP7 and YTM1. The complex is held together by ERB1, which interacts with NOP7 via its N-terminal domain and with YTM1 via a high-affinity interaction between the seven-bladed beta-propeller domains of the 2 proteins. The NOP7 complex associates with the 66S pre-ribosome. Interacts (via UBL domain) with MDN1 (via VWFA/MIDAS domain).

It localises to the nucleus. The protein resides in the nucleolus. Its subcellular location is the nucleoplasm. In terms of biological role, component of the NOP7 complex, which is required for maturation of the 25S and 5.8S ribosomal RNAs and formation of the 60S ribosome. The protein is Ribosome biogenesis protein YTM1 of Saccharomyces cerevisiae (strain YJM789) (Baker's yeast).